Consider the following 179-residue polypeptide: Transmembrane protein 196 (179 aa).

The next 4 helical transmembrane spans lie at 11–31 (LLVL…VGAV), 44–61 (LGDS…ILCA), 67–87 (LVMI…ILNF), and 100–120 (LYPL…GCTL).

The protein localises to the cytoplasm. The protein resides in the membrane. Functionally, acts as a tumor suppressor in lung cancer. Inhibits tumor cell growth by inhibiting cell proliferation and migration and promoting cell apoptosis. Inhibits metastasis of lung cancer by suppressing beta-catenin expression in the Wnt/beta-catenin signaling pathway. This Pongo abelii (Sumatran orangutan) protein is Transmembrane protein 196 (TMEM196).